The following is a 327-amino-acid chain: Biotin synthase (327 aa).

Residues 49–282 (FNKEKIDLCS…NKVIRLCGGR (234 aa)) form the Radical SAM core domain. [4Fe-4S] cluster contacts are provided by Cys67, Cys71, and Cys74. Positions 110, 142, 201, and 277 each coordinate [2Fe-2S] cluster.

Belongs to the radical SAM superfamily. Biotin synthase family. As to quaternary structure, homodimer. It depends on [4Fe-4S] cluster as a cofactor. The cofactor is [2Fe-2S] cluster.

It catalyses the reaction (4R,5S)-dethiobiotin + (sulfur carrier)-SH + 2 reduced [2Fe-2S]-[ferredoxin] + 2 S-adenosyl-L-methionine = (sulfur carrier)-H + biotin + 2 5'-deoxyadenosine + 2 L-methionine + 2 oxidized [2Fe-2S]-[ferredoxin]. It participates in cofactor biosynthesis; biotin biosynthesis; biotin from 7,8-diaminononanoate: step 2/2. Its function is as follows. Catalyzes the conversion of dethiobiotin (DTB) to biotin by the insertion of a sulfur atom into dethiobiotin via a radical-based mechanism. The sequence is that of Biotin synthase from Methanococcus maripaludis (strain DSM 14266 / JCM 13030 / NBRC 101832 / S2 / LL).